Here is a 120-residue protein sequence, read N- to C-terminus: Large ribosomal subunit protein uL18 (120 aa).

The protein belongs to the universal ribosomal protein uL18 family. Part of the 50S ribosomal subunit; part of the 5S rRNA/L5/L18/L25 subcomplex. Contacts the 5S and 23S rRNAs.

In terms of biological role, this is one of the proteins that bind and probably mediate the attachment of the 5S RNA into the large ribosomal subunit, where it forms part of the central protuberance. The polypeptide is Large ribosomal subunit protein uL18 (Afipia carboxidovorans (strain ATCC 49405 / DSM 1227 / KCTC 32145 / OM5) (Oligotropha carboxidovorans)).